We begin with the raw amino-acid sequence, 548 residues long: Probable malate:quinone oxidoreductase (548 aa).

Positions 521–548 (DKPQAADSTPKPQLKPQPVQKEVADIAL) are disordered. Residues 530–541 (PKPQLKPQPVQK) are compositionally biased toward low complexity.

It belongs to the MQO family. FAD is required as a cofactor.

It carries out the reaction (S)-malate + a quinone = a quinol + oxaloacetate. Its pathway is carbohydrate metabolism; tricarboxylic acid cycle; oxaloacetate from (S)-malate (quinone route): step 1/1. In Escherichia coli O17:K52:H18 (strain UMN026 / ExPEC), this protein is Probable malate:quinone oxidoreductase.